The chain runs to 424 residues: C4-dicarboxylate transport protein (424 aa).

A run of 8 helical transmembrane segments spans residues 4–24 (SLFKSLYFQVLAAIAIGVLLG), 44–64 (LIKMIIAPVIFCTVVSGIAGM), 76–96 (VALIYFEVVSTIALIIGLVVV), 142–162 (IGAFASGNILQVLLFAILFGF), 184–206 (VFFGIINMIMRLAPVGAFGAMAF), 222–242 (LIVCFYITCLLFVVVVLGLIA), 326–346 (IWHQITLLVVLLLSSKGAAGV), and 352–372 (IVLAATLSAVGHLPVAGLALI).

Belongs to the dicarboxylate/amino acid:cation symporter (DAACS) (TC 2.A.23) family.

The protein resides in the cell inner membrane. Responsible for the transport of dicarboxylates such as succinate, fumarate, and malate from the periplasm across the membrane. This is C4-dicarboxylate transport protein from Erwinia tasmaniensis (strain DSM 17950 / CFBP 7177 / CIP 109463 / NCPPB 4357 / Et1/99).